A 600-amino-acid polypeptide reads, in one-letter code: PWWP domain-containing protein 2B (600 aa).

Disordered stretches follow at residues 81 to 115 (ETGP…PVPA), 143 to 171 (WVPQ…LILS), 186 to 350 (KSTV…LGDG), 366 to 408 (GCPR…PQGK), and 426 to 477 (DCTS…TVPP). The span at 104 to 115 (EPPPPLIPPVPA) shows a compositional bias: pro residues. The segment covering 151–160 (TIKRTRRRLS) has biased composition (basic residues). Residues 187–200 (STVSPQEASPSPLN) are compositionally biased toward polar residues. Ser-190 and Ser-210 each carry phosphoserine. The segment covering 239–252 (EKREEDRVAGERVP) has biased composition (basic and acidic residues). Residue Ser-254 is modified to Phosphoserine. The span at 286 to 297 (PQQSLQNGSQDS) shows a compositional bias: polar residues. A compositionally biased stretch (basic and acidic residues) spans 298 to 309 (EVSRDVEPRGGG). The span at 328-339 (PVPPISDLPPPK) shows a compositional bias: pro residues. Positions 381-395 (DGSSHGLEDLSSGSS) are enriched in low complexity. The span at 443 to 456 (SSGSEVTSPDTGDL) shows a compositional bias: polar residues. At Ser-457 the chain carries Phosphoserine. The segment covering 457–468 (SSGDSASVPSSS) has biased composition (low complexity). One can recognise a PWWP domain in the interval 500-560 (VGDIVWGKIH…ISKLSPFSEF (61 aa)).

As to quaternary structure, component of a MTA1-specific subcomplex of the NuRD complex composed of PWWP2B, MTA1 and HDAC1 but does not contain CHD4 and MBD3. Interacts with MTA1, MTA2, MTA3, HDAC1, HDAC2, RBBP4, RBBP7, BRCC3 and ZNF516. Does not interact with CHD4 and MBD3. Post-translationally, deubiquitinated by BRCC3; leading to its stabilization. As to expression, expressed in the brown adipose tissue.

It is found in the nucleus. In terms of biological role, chromatin-binding protein that acts as an adapter between distinct nucleosome components (H3K36me3 or H2A.Z) and chromatin-modifying complexes, contributing to the regulation of the levels of histone acetylation at actively transcribed genes. Competes with CHD4 and MBD3 for interaction with MTA1 to form a NuRD subcomplex, preventing the formation of full NuRD complex (containing CHD4 and MBD3), leading to recruitment of HDACs to gene promoters resulting in turn in the deacetylation of nearby H3K27 and H2A.Z. Plays a role in facilitating transcriptional elongation through regulation of histone acetylation. Negatively regulates brown adipocyte thermogenesis by interacting with and stabilizing HDAC1 at the UCP1 gene promoter, thereby promoting histone deacetylation at the promoter leading to the repression of UCP1 expression. This is PWWP domain-containing protein 2B (Pwwp2b) from Mus musculus (Mouse).